The following is a 244-amino-acid chain: 2-C-methyl-D-erythritol 4-phosphate cytidylyltransferase (244 aa).

This sequence belongs to the IspD/TarI cytidylyltransferase family. IspD subfamily.

It carries out the reaction 2-C-methyl-D-erythritol 4-phosphate + CTP + H(+) = 4-CDP-2-C-methyl-D-erythritol + diphosphate. Its pathway is isoprenoid biosynthesis; isopentenyl diphosphate biosynthesis via DXP pathway; isopentenyl diphosphate from 1-deoxy-D-xylulose 5-phosphate: step 2/6. Catalyzes the formation of 4-diphosphocytidyl-2-C-methyl-D-erythritol from CTP and 2-C-methyl-D-erythritol 4-phosphate (MEP). This chain is 2-C-methyl-D-erythritol 4-phosphate cytidylyltransferase, found in Prosthecochloris aestuarii (strain DSM 271 / SK 413).